Reading from the N-terminus, the 194-residue chain is Outer surface 22 kDa lipoprotein (194 aa).

A signal peptide spans 1–21; sequence MYKNGFFKNYLSLLLIFLVIA. C22 carries the N-palmitoyl cysteine lipid modification. A lipid anchor (S-diacylglycerol cysteine) is attached at C22.

The protein localises to the cell outer membrane. The chain is Outer surface 22 kDa lipoprotein (p22) from Borreliella burgdorferi (strain N40) (Borrelia burgdorferi).